The following is a 723-amino-acid chain: Multiple organellar RNA editing factor 4, mitochondrial (723 aa).

The N-terminal 64 residues, 1-64 (MAMFSHRLRR…RLFSTTQYQY (64 aa)), are a transit peptide targeting the mitochondrion. Disordered regions lie at residues 180-303 (ITPG…GQTQ), 318-474 (RQEM…EGQP), and 663-723 (QNGG…NSRI). Residues 191 to 204 (EGFDSLKKESKPEQ) are compositionally biased toward basic and acidic residues. 4 stretches are compositionally biased toward polar residues: residues 219–233 (TSGQ…TLPD), 273–303 (GQWQ…GQTQ), 327–365 (GQAQ…QGAQ), and 373–430 (QGAQ…NYSP). Composition is skewed to low complexity over residues 459–474 (QGQG…EGQP) and 682–695 (QGFS…TFQQ). Basic and acidic residues predominate over residues 714-723 (TETRKPNSRI).

It belongs to the MORF family. In terms of assembly, heterodimers with MORF8/RIP1, MORF1/RIP8 and MORF3/RIP3.

It localises to the mitochondrion. Its function is as follows. Involved in organellar RNA editing. Required for the processing of few RNA editing site in mitochondria. The chain is Multiple organellar RNA editing factor 4, mitochondrial from Arabidopsis thaliana (Mouse-ear cress).